We begin with the raw amino-acid sequence, 104 residues long: Large ribosomal subunit protein bL21 (104 aa).

The protein belongs to the bacterial ribosomal protein bL21 family. Part of the 50S ribosomal subunit. Contacts protein L20.

Functionally, this protein binds to 23S rRNA in the presence of protein L20. The chain is Large ribosomal subunit protein bL21 from Francisella tularensis subsp. tularensis (strain FSC 198).